Consider the following 232-residue polypeptide: Ribonuclease 3 (232 aa).

The region spanning 10-135 is the RNase III domain; it reads ALKIYEATGY…LIGAMYMDGG (126 aa). A Mg(2+)-binding site is contributed by E48. D52 is a catalytic residue. Mg(2+) contacts are provided by N121 and E124. E124 is a catalytic residue. The 70-residue stretch at 161–230 folds into the DRBM domain; the sequence is DPKTALQEWV…AKLMLKKITE (70 aa).

Belongs to the ribonuclease III family. In terms of assembly, homodimer. Requires Mg(2+) as cofactor.

The protein localises to the cytoplasm. It carries out the reaction Endonucleolytic cleavage to 5'-phosphomonoester.. Its function is as follows. Digests double-stranded RNA. Involved in the processing of primary rRNA transcript to yield the immediate precursors to the large and small rRNAs (23S and 16S). Processes some mRNAs, and tRNAs when they are encoded in the rRNA operon. Processes pre-crRNA and tracrRNA of type II CRISPR loci if present in the organism. This is Ribonuclease 3 from Anaplasma marginale (strain Florida).